Consider the following 430-residue polypeptide: Methylenetetrahydrofolate--tRNA-(uracil-5-)-methyltransferase TrmFO (430 aa).

9 to 14 (GAGLAG) is a binding site for FAD.

The protein belongs to the MnmG family. TrmFO subfamily. Requires FAD as cofactor.

It localises to the cytoplasm. The catalysed reaction is uridine(54) in tRNA + (6R)-5,10-methylene-5,6,7,8-tetrahydrofolate + NADH + H(+) = 5-methyluridine(54) in tRNA + (6S)-5,6,7,8-tetrahydrofolate + NAD(+). It carries out the reaction uridine(54) in tRNA + (6R)-5,10-methylene-5,6,7,8-tetrahydrofolate + NADPH + H(+) = 5-methyluridine(54) in tRNA + (6S)-5,6,7,8-tetrahydrofolate + NADP(+). Functionally, catalyzes the folate-dependent formation of 5-methyl-uridine at position 54 (M-5-U54) in all tRNAs. This Fervidobacterium nodosum (strain ATCC 35602 / DSM 5306 / Rt17-B1) protein is Methylenetetrahydrofolate--tRNA-(uracil-5-)-methyltransferase TrmFO.